A 115-amino-acid polypeptide reads, in one-letter code: Type 3 secretion system chaperone PscG (115 aa).

This sequence belongs to the YscG family. As to quaternary structure, forms a stable heterotrimeric complex with PscE and PscF/SctF in the cytoplasm. Co-stabilized by PscE.

The protein localises to the cytoplasm. Functionally, chaperone of the type III secretion system (T3SS), also called injectisome, which is used to inject bacterial effector proteins into eukaryotic host cells, facilitating the establishment and dissemination of infection. Along with PscE, prevents premature polymerization of the PscF/SctF needle protein within the cytoplasm. Required for type III secretion needle assembly. Also required for cytotoxicity by influencing PscF/SctF levels. The chain is Type 3 secretion system chaperone PscG (pscG) from Pseudomonas aeruginosa (strain ATCC 15692 / DSM 22644 / CIP 104116 / JCM 14847 / LMG 12228 / 1C / PRS 101 / PAO1).